The sequence spans 131 residues: Small ribosomal subunit protein bS6 (131 aa).

The tract at residues 92-131 (RVDEHKDGPSVQMQKRDERERGDRGDRGERRERRDRDDRN) is disordered.

It belongs to the bacterial ribosomal protein bS6 family.

Functionally, binds together with bS18 to 16S ribosomal RNA. In Paracoccus denitrificans (strain Pd 1222), this protein is Small ribosomal subunit protein bS6.